Here is a 443-residue protein sequence, read N- to C-terminus: 5-methylthioadenosine/S-adenosylhomocysteine deaminase 1 (443 aa).

Zn(2+)-binding residues include histidine 69 and histidine 71. The substrate site is built by glutamate 98 and histidine 191. A Zn(2+)-binding site is contributed by histidine 218. Substrate-binding residues include glutamate 221 and aspartate 306. A Zn(2+)-binding site is contributed by aspartate 306.

Belongs to the metallo-dependent hydrolases superfamily. MTA/SAH deaminase family. The cofactor is Zn(2+).

The catalysed reaction is S-adenosyl-L-homocysteine + H2O + H(+) = S-inosyl-L-homocysteine + NH4(+). It catalyses the reaction S-methyl-5'-thioadenosine + H2O + H(+) = S-methyl-5'-thioinosine + NH4(+). Functionally, catalyzes the deamination of 5-methylthioadenosine and S-adenosyl-L-homocysteine into 5-methylthioinosine and S-inosyl-L-homocysteine, respectively. Is also able to deaminate adenosine. The sequence is that of 5-methylthioadenosine/S-adenosylhomocysteine deaminase 1 from Syntrophus aciditrophicus (strain SB).